The sequence spans 274 residues: SWI/SNF chromatin-remodeling complex subunit snf30 (274 aa).

2 stretches are compositionally biased toward polar residues: residues 123–150 and 157–167; these read TLSY…GTMQ and PSLTRSDSVSS. The disordered stretch occupies residues 123 to 167; that stretch reads TLSYPPSNGDSSSYANGTDLHGNTGTMQQEEKANPSLTRSDSVSS.

Component of the SWI/SNF global transcription activator complex composed of at least arp9, arp42, snf5, snf22, snf30, sbf59, sol1, ssr1, ssr2, ssr3, ssr4 and tfg3.

It is found in the cytoplasm. Its subcellular location is the nucleus. In terms of biological role, component of the SWI/SNF complex, an ATP-dependent chromatin remodeling complex, required for the positive and negative regulation of gene expression of a large number of genes. It changes chromatin structure by altering DNA-histone contacts within a nucleosome, leading eventually to a change in nucleosome position, thus facilitating or repressing binding of gene-specific transcription factors. This Schizosaccharomyces pombe (strain 972 / ATCC 24843) (Fission yeast) protein is SWI/SNF chromatin-remodeling complex subunit snf30 (snf30).